Reading from the N-terminus, the 490-residue chain is Serine/threonine-protein kinase PBL35 (490 aa).

Disordered stretches follow at residues 1–39 (MGFD…RNSE) and 80–103 (SAIV…SNAE). Residues 14 to 39 (SKTSNENEKKKKKRRRKKNNNVRNSE) adopt a coiled-coil conformation. The segment covering 23-33 (KKKKRRRKKNN) has biased composition (basic residues). Residues 94–103 (SSTTTTSNAE) are compositionally biased toward low complexity. Positions 136–422 (FRPESLLGEG…VEVLKPLPHL (287 aa)) constitute a Protein kinase domain. Residues 142-150 (LGEGGFGCV) and lysine 174 each bind ATP. The residue at position 219 (tyrosine 219) is a Phosphotyrosine. Residue aspartate 269 is the Proton acceptor of the active site. A phosphoserine mark is found at serine 273 and serine 303. Phosphothreonine is present on residues threonine 304 and threonine 309. Tyrosine 317 carries the post-translational modification Phosphotyrosine. Residues 442-490 (AGSGSGSGRGFGSRNGQPVFRTLSSPHGQAGSSPYRHQIPSPKPKGATT) are disordered. The span at 444 to 454 (SGSGSGRGFGS) shows a compositional bias: gly residues. Polar residues predominate over residues 463-473 (TLSSPHGQAGS).

Belongs to the protein kinase superfamily. Ser/Thr protein kinase family. In terms of assembly, interacts with SD129. Phosphorylated by SD129 in response to the pathogen-associated molecular pattern (PAMP) 3-OH-C10:0, a medium-chain 3-hydroxy fatty acid.

The protein localises to the cell membrane. The catalysed reaction is L-seryl-[protein] + ATP = O-phospho-L-seryl-[protein] + ADP + H(+). The enzyme catalyses L-threonyl-[protein] + ATP = O-phospho-L-threonyl-[protein] + ADP + H(+). Its function is as follows. Involved in chitin-triggered immune signaling and is required for reactive oxygen species (ROS) production. Acts downstream of SD129 in defense signaling triggered by the pathogen-associated molecular pattern (PAMP) 3-OH-C10:0, a medium-chain 3-hydroxy fatty acid. This is Serine/threonine-protein kinase PBL35 from Arabidopsis thaliana (Mouse-ear cress).